Here is a 463-residue protein sequence, read N- to C-terminus: L-seryl-tRNA(Sec) selenium transferase (463 aa).

Lys295 carries the post-translational modification N6-(pyridoxal phosphate)lysine.

Belongs to the SelA family. As to quaternary structure, homodecamer; pentamer of dimers. Binds only one seryl-tRNA(Sec) per dimer. It depends on pyridoxal 5'-phosphate as a cofactor.

The protein resides in the cytoplasm. It catalyses the reaction L-seryl-tRNA(Sec) + selenophosphate + H(+) = L-selenocysteinyl-tRNA(Sec) + phosphate. It functions in the pathway aminoacyl-tRNA biosynthesis; selenocysteinyl-tRNA(Sec) biosynthesis; selenocysteinyl-tRNA(Sec) from L-seryl-tRNA(Sec) (bacterial route): step 1/1. Its function is as follows. Converts seryl-tRNA(Sec) to selenocysteinyl-tRNA(Sec) required for selenoprotein biosynthesis. This chain is L-seryl-tRNA(Sec) selenium transferase, found in Escherichia coli O139:H28 (strain E24377A / ETEC).